Consider the following 533-residue polypeptide: Lysine--tRNA ligase 1 (533 aa).

The 'HIGH' region signature appears at 26–34; sequence PSGHIHIGN. A 'KMSKS' region motif is present at residues 272–276; it reads AMSSS.

The protein belongs to the class-I aminoacyl-tRNA synthetase family.

It is found in the cytoplasm. The catalysed reaction is tRNA(Lys) + L-lysine + ATP = L-lysyl-tRNA(Lys) + AMP + diphosphate. This is Lysine--tRNA ligase 1 from Methanosarcina acetivorans (strain ATCC 35395 / DSM 2834 / JCM 12185 / C2A).